A 478-amino-acid chain; its full sequence is Probable L-ascorbate peroxidase 8, chloroplastic (478 aa).

Low complexity predominate over residues 1 to 13 (MAERIAASLLPAA). 2 disordered regions span residues 1–31 (MAER…VSAA) and 44–66 (GGLR…RSGR). A chloroplast-targeting transit peptide spans 1–76 (MAERIAASLL…AGAGARAVVR (76 aa)). Residues 14–26 (SPSPAPSPPPPRP) show a composition bias toward pro residues. Histidine 117 functions as the Proton acceptor in the catalytic mechanism. The tract at residues 245–276 (AHTLGRSRPDRSGWGKPETKYTKDGPGEPGGQ) is disordered. Histidine 246 serves as a coordination point for heme b. Threonine 247 is a binding site for K(+). Basic and acidic residues predominate over residues 251 to 270 (SRPDRSGWGKPETKYTKDGP). Threonine 279 and aspartate 286 together coordinate K(+). Positions 346-417 (AKFDPPEGFS…DNNGAAPQPE (72 aa)) are disordered. Positions 369-381 (PAPAPAAAPPPPP) are enriched in pro residues. A compositionally biased stretch (low complexity) spans 394–406 (PVTVGAAVASSPA). The chain crosses the membrane as a helical span at residues 458-478 (YFLNIMLLIGGLAFLTSLLGS).

The protein belongs to the peroxidase family. Ascorbate peroxidase subfamily. As to quaternary structure, interacts with SWEET11/OS8N3. Heme b serves as cofactor. Expressed in roots, leaves, stems and flowers. Expressed in leaves, shoots and panicles. Expressed at low levels in roots.

Its subcellular location is the plastid. It localises to the chloroplast thylakoid membrane. The catalysed reaction is L-ascorbate + H2O2 = L-dehydroascorbate + 2 H2O. Functionally, involved in defense response and tolerance to the bacterial pathogen Xanthomonas oryzae pv. oryzae (Xoo). Plays an important role in hydrogen peroxide removal during infection by Xoo. Involved in response to abiotic stress. Plays a role in hydrogen peroxide removal durings salt stress. This is Probable L-ascorbate peroxidase 8, chloroplastic from Oryza sativa subsp. japonica (Rice).